An 816-amino-acid polypeptide reads, in one-letter code: Leucine--tRNA ligase (816 aa).

The 'HIGH' region signature appears at 40–51 (SYPSGAQLHAGH). The short motif at 576-580 (KMSKS) is the 'KMSKS' region element. Residue lysine 579 coordinates ATP.

Belongs to the class-I aminoacyl-tRNA synthetase family.

The protein resides in the cytoplasm. The catalysed reaction is tRNA(Leu) + L-leucine + ATP = L-leucyl-tRNA(Leu) + AMP + diphosphate. In Clostridium beijerinckii (strain ATCC 51743 / NCIMB 8052) (Clostridium acetobutylicum), this protein is Leucine--tRNA ligase.